A 1435-amino-acid chain; its full sequence is DNA polymerase III PolC-type (1435 aa).

The region spanning 404-562 (YVVYDIETTG…YDSSVLTNIF (159 aa)) is the Exonuclease domain.

Belongs to the DNA polymerase type-C family. PolC subfamily.

The protein resides in the cytoplasm. The catalysed reaction is DNA(n) + a 2'-deoxyribonucleoside 5'-triphosphate = DNA(n+1) + diphosphate. Required for replicative DNA synthesis. This DNA polymerase also exhibits 3' to 5' exonuclease activity. The protein is DNA polymerase III PolC-type of Mycoplasmopsis pulmonis (strain UAB CTIP) (Mycoplasma pulmonis).